The following is a 92-amino-acid chain: Small ribosomal subunit protein uS19 (92 aa).

The protein belongs to the universal ribosomal protein uS19 family.

In terms of biological role, protein S19 forms a complex with S13 that binds strongly to the 16S ribosomal RNA. This is Small ribosomal subunit protein uS19 from Sinorhizobium medicae (strain WSM419) (Ensifer medicae).